A 147-amino-acid polypeptide reads, in one-letter code: Sentan (147 aa).

Residues 1-32 (MGGCMHSTQDKSLHLEGDPNPSAAPTSTCAPR) are disordered. Residues 8-17 (TQDKSLHLEG) are compositionally biased toward basic and acidic residues.

Belongs to the S-100 family.

Its subcellular location is the cell projection. The protein resides in the cilium. May be a component of the linker structure that bridges the ciliary membrane and peripheral singlet microtubules. The sequence is that of Sentan (SNTN) from Homo sapiens (Human).